Reading from the N-terminus, the 156-residue chain is 3-hydroxyacyl-[acyl-carrier-protein] dehydratase FabZ (156 aa).

Residue H57 is part of the active site.

This sequence belongs to the thioester dehydratase family. FabZ subfamily.

The protein localises to the cytoplasm. The catalysed reaction is a (3R)-hydroxyacyl-[ACP] = a (2E)-enoyl-[ACP] + H2O. Functionally, involved in unsaturated fatty acids biosynthesis. Catalyzes the dehydration of short chain beta-hydroxyacyl-ACPs and long chain saturated and unsaturated beta-hydroxyacyl-ACPs. The polypeptide is 3-hydroxyacyl-[acyl-carrier-protein] dehydratase FabZ (Anaeromyxobacter sp. (strain K)).